The primary structure comprises 156 residues: Peroxisome assembly protein 22 (156 aa).

The helical transmembrane segment at 24–46 (LSIIAVGVLSTVAVTVGYLLYLY) threads the bilayer.

Belongs to the peroxin-22 family.

The protein localises to the peroxisome membrane. Involved in peroxisome biogenesis. This chain is Peroxisome assembly protein 22 (PEX22), found in Kluyveromyces lactis (strain ATCC 8585 / CBS 2359 / DSM 70799 / NBRC 1267 / NRRL Y-1140 / WM37) (Yeast).